The sequence spans 304 residues: ATP phosphoribosyltransferase (304 aa).

Belongs to the ATP phosphoribosyltransferase family. Long subfamily. It depends on Mg(2+) as a cofactor.

The protein localises to the cytoplasm. It catalyses the reaction 1-(5-phospho-beta-D-ribosyl)-ATP + diphosphate = 5-phospho-alpha-D-ribose 1-diphosphate + ATP. It participates in amino-acid biosynthesis; L-histidine biosynthesis; L-histidine from 5-phospho-alpha-D-ribose 1-diphosphate: step 1/9. Its activity is regulated as follows. Feedback inhibited by histidine. Catalyzes the condensation of ATP and 5-phosphoribose 1-diphosphate to form N'-(5'-phosphoribosyl)-ATP (PR-ATP). Has a crucial role in the pathway because the rate of histidine biosynthesis seems to be controlled primarily by regulation of HisG enzymatic activity. This chain is ATP phosphoribosyltransferase, found in Xanthomonas euvesicatoria pv. vesicatoria (strain 85-10) (Xanthomonas campestris pv. vesicatoria).